Reading from the N-terminus, the 313-residue chain is Protein sprouty homolog 2 (313 aa).

Positions Met1–Leu14 are enriched in polar residues. Disordered regions lie at residues Met1–Arg31 and Glu54–Gly146. Composition is skewed to basic and acidic residues over residues Ala17–Arg31 and Lys78–Arg89. Positions Ser108–Ser131 are enriched in low complexity. The span at Glu132 to Gly141 shows a compositional bias: polar residues. The 115-residue stretch at Arg175–Cys289 folds into the SPR domain.

Belongs to the sprouty family. Brain and interlimb region.

The protein resides in the cytoplasm. It localises to the membrane. In terms of biological role, acts as an antagonist of FGF-induced retinal lens fiber differentiation. Inhibits TGFB-induced epithelial-to-mesenchymal transition in retinal lens epithelial cells. May play an important role in FGF-mediated patterning of the mid/hindbrain region by acting to modulate the signaling effects of FGF8. The sequence is that of Protein sprouty homolog 2 (SPRY2) from Gallus gallus (Chicken).